A 382-amino-acid chain; its full sequence is Flap endonuclease 1 (382 aa).

Positions 1–104 are N-domain; it reads MGIKGLSQVI…GELEKRTERR (104 aa). Asp-34 provides a ligand contact to Mg(2+). Residues Arg-47 and Arg-70 each coordinate DNA. Asp-86, Glu-158, Glu-160, Asp-179, and Asp-181 together coordinate Mg(2+). The interval 122–253 is I-domain; that stretch reads EAEKFERRLV…KKAVELIKQH (132 aa). Residue Glu-158 coordinates DNA. 2 residues coordinate DNA: Gly-231 and Asp-233. Asp-233 contributes to the Mg(2+) binding site. The segment at 336–344 is interaction with PCNA; that stretch reads TQGRIDSFF. Residues 359–368 show a composition bias toward basic and acidic residues; that stretch reads KAQEEAEKMK. The segment at 359-382 is disordered; it reads KAQEEAEKMKKGGKKSGPPKKKAK. Residues 369-382 are compositionally biased toward basic residues; that stretch reads KGGKKSGPPKKKAK.

This sequence belongs to the XPG/RAD2 endonuclease family. FEN1 subfamily. In terms of assembly, interacts with PCNA. Three molecules of crn-1 bind to one PCNA trimer with each molecule binding to one PCNA monomer. PCNA stimulates the nuclease activity without altering cleavage specificity. Requires Mg(2+) as cofactor. In terms of processing, phosphorylated. Phosphorylation upon DNA damage induces relocalization to the nuclear plasma.

The protein resides in the nucleus. It is found in the nucleolus. The protein localises to the nucleoplasm. Its subcellular location is the mitochondrion. Its function is as follows. Structure-specific nuclease with 5'-flap endonuclease and 5'-3' exonuclease activities involved in DNA replication and repair. During DNA replication, cleaves the 5'-overhanging flap structure that is generated by displacement synthesis when DNA polymerase encounters the 5'-end of a downstream Okazaki fragment. It enters the flap from the 5'-end and then tracks to cleave the flap base, leaving a nick for ligation. Also involved in the long patch base excision repair (LP-BER) pathway, by cleaving within the apurinic/apyrimidinic (AP) site-terminated flap. Acts as a genome stabilization factor that prevents flaps from equilibrating into structures that lead to duplications and deletions. Also possesses 5'-3' exonuclease activity on nicked or gapped double-stranded DNA, and exhibits RNase H activity. Also involved in replication and repair of rDNA and in repairing mitochondrial DNA. This is Flap endonuclease 1 from Caenorhabditis briggsae.